Consider the following 347-residue polypeptide: Major capsid protein (347 aa).

This sequence belongs to the baculoviridae major capsid protein family.

It localises to the virion. In terms of biological role, most abundant structural protein of the nucleocapsid produced during the infection cycle. The monomers are arranged in stacked rings around the nucleoprotein core. In Autographa californica nuclear polyhedrosis virus (AcMNPV), this protein is Major capsid protein (P39).